A 79-amino-acid chain; its full sequence is Sec-independent protein translocase protein TatA (79 aa).

The chain crosses the membrane as a helical span at residues 1 to 21; that stretch reads MGSFSIWHWLIVLAIVVLVFG. A disordered region spans residues 43 to 79; that stretch reads VKDGSTSTDTPAAAPGQVAGQTAADKTTIDVEAKQKG. The segment covering 69–79 has biased composition (basic and acidic residues); it reads TTIDVEAKQKG.

The protein belongs to the TatA/E family. As to quaternary structure, the Tat system comprises two distinct complexes: a TatABC complex, containing multiple copies of TatA, TatB and TatC subunits, and a separate TatA complex, containing only TatA subunits. Substrates initially bind to the TatABC complex, which probably triggers association of the separate TatA complex to form the active translocon.

It localises to the cell inner membrane. Part of the twin-arginine translocation (Tat) system that transports large folded proteins containing a characteristic twin-arginine motif in their signal peptide across membranes. TatA could form the protein-conducting channel of the Tat system. This Delftia acidovorans (strain DSM 14801 / SPH-1) protein is Sec-independent protein translocase protein TatA.